A 515-amino-acid chain; its full sequence is Ribose import ATP-binding protein RbsA 1 (515 aa).

2 ABC transporter domains span residues 8–244 (FQME…IGRE) and 256–503 (VPAT…LNIH). 40–47 (GENGAGKS) serves as a coordination point for ATP.

This sequence belongs to the ABC transporter superfamily. Ribose importer (TC 3.A.1.2.1) family. The complex is composed of an ATP-binding protein (RbsA), two transmembrane proteins (RbsC) and a solute-binding protein (RbsB).

It localises to the cell inner membrane. It catalyses the reaction D-ribose(out) + ATP + H2O = D-ribose(in) + ADP + phosphate + H(+). Part of the ABC transporter complex RbsABC involved in ribose import. Responsible for energy coupling to the transport system. In Mesorhizobium japonicum (strain LMG 29417 / CECT 9101 / MAFF 303099) (Mesorhizobium loti (strain MAFF 303099)), this protein is Ribose import ATP-binding protein RbsA 1.